We begin with the raw amino-acid sequence, 295 residues long: Putative sugar uptake protein YxfA (295 aa).

10 helical membrane passes run 4-26 (VLLA…KFGG), 33-50 (LGMT…FLFR), 54-72 (LTWQ…WAIG), 85-107 (VSVA…GVFA), 117-135 (FILG…YFSA), 156-178 (ALTY…AVLW), 188-206 (IILP…MGRF), 213-235 (YVYQ…LMAA), 241-263 (AIAF…LFLG), and 270-291 (ELVY…LAIV).

This sequence belongs to the GRP transporter (TC 2.A.7.5) family.

It is found in the cell membrane. The chain is Putative sugar uptake protein YxfA (yxfA) from Lactococcus lactis subsp. lactis (strain IL1403) (Streptococcus lactis).